Here is a 233-residue protein sequence, read N- to C-terminus: tRNA (guanine-N(7)-)-methyltransferase (233 aa).

Glu62, Glu87, Asp116, and Asp138 together coordinate S-adenosyl-L-methionine. Asp138 is a catalytic residue. Residues Lys142, Asp174, and 212 to 215 contribute to the substrate site; that span reads TRYE.

It belongs to the class I-like SAM-binding methyltransferase superfamily. TrmB family.

It carries out the reaction guanosine(46) in tRNA + S-adenosyl-L-methionine = N(7)-methylguanosine(46) in tRNA + S-adenosyl-L-homocysteine. It participates in tRNA modification; N(7)-methylguanine-tRNA biosynthesis. Functionally, catalyzes the formation of N(7)-methylguanine at position 46 (m7G46) in tRNA. The sequence is that of tRNA (guanine-N(7)-)-methyltransferase from Bartonella henselae (strain ATCC 49882 / DSM 28221 / CCUG 30454 / Houston 1) (Rochalimaea henselae).